A 315-amino-acid chain; its full sequence is Transcriptional regulator protein Pur-beta (315 aa).

The interval 1-39 (MADGDSGSERGGGGPGSFQPAPRGGGGPGGEQETQELAS) is disordered. At alanine 2 the chain carries N-acetylalanine. A phosphoserine mark is found at serine 6 and serine 8. Arginine 23 is modified (omega-N-methylarginine). Positions 28-254 (PGGEQETQEL…GVFLRVSEVK (227 aa)) are DNA-binding. At threonine 34 the chain carries Phosphothreonine. Serine 104 is subject to Phosphoserine. The residue at position 155 (arginine 155) is an Omega-N-methylarginine. Residues 200–220 (DDELAGGPGGGAGGPGGGLYG) are disordered. Residues 205–219 (GGPGGGAGGPGGGLY) are compositionally biased toward gly residues. Position 270 is an N6-acetyllysine (lysine 270). Positions 288–298 (RQRDKLYERRG) are enriched in basic and acidic residues. Residues 288-315 (RQRDKLYERRGGGSGGGDESEGEEVDED) form a disordered region. An Omega-N-methylarginine modification is found at arginine 297. A phosphoserine mark is found at serine 301 and serine 307. Residues 305 to 315 (DESEGEEVDED) are compositionally biased toward acidic residues.

It belongs to the PUR DNA-binding protein family. Homodimer, heterodimer with PURA and heterotrimer with PURA and YBX1/Y-box protein 1. Interacts with MYOCD and SRF. In terms of tissue distribution, expressed in muscle cells and in the liver.

The protein localises to the nucleus. In terms of biological role, transcriptional regulator which can act as an activator or a repressor. Represses the transcription of ACTA2 in fibroblasts and smooth muscle cells via its ability to interact with the purine-rich strand of a MCAT- containing element in the 5' flanking region of the gene. Represses the transcription of MYOCD, capable of repressing all isoforms of MYOCD but the magnitude of the repressive effects is most notable for the SMC- specific isoforms. Promotes hepatic glucose production by activating the transcription of ADCY6, leading to cAMP accumulation, increased PKA activity, CREB activation, and increased transcription of PCK1 and G6PC genes. Has capacity to bind repeated elements in single-stranded DNA such as the purine-rich single strand of the PUR element located upstream of the MYC gene. Participates in transcriptional and translational regulation of alpha-MHC expression in cardiac myocytes by binding to the purine-rich negative regulatory (PNR) element. Modulates constitutive liver galectin-3 gene transcription by binding to its promoter. May play a role in the dendritic transport of a subset of mRNAs. The sequence is that of Transcriptional regulator protein Pur-beta (Purb) from Rattus norvegicus (Rat).